A 139-amino-acid polypeptide reads, in one-letter code: Small ribosomal subunit protein uS12 (139 aa).

Residues 118–139 are disordered; that stretch reads AGVANRNQSRSRYGTKKPKPKS. The span at 130 to 139 shows a compositional bias: basic residues; that stretch reads YGTKKPKPKS.

It belongs to the universal ribosomal protein uS12 family. In terms of assembly, part of the 30S ribosomal subunit. Contacts proteins S8 and S17. May interact with IF1 in the 30S initiation complex.

Its function is as follows. With S4 and S5 plays an important role in translational accuracy. Interacts with and stabilizes bases of the 16S rRNA that are involved in tRNA selection in the A site and with the mRNA backbone. Located at the interface of the 30S and 50S subunits, it traverses the body of the 30S subunit contacting proteins on the other side and probably holding the rRNA structure together. The combined cluster of proteins S8, S12 and S17 appears to hold together the shoulder and platform of the 30S subunit. The chain is Small ribosomal subunit protein uS12 from Mycoplasma mobile (strain ATCC 43663 / 163K / NCTC 11711) (Mesomycoplasma mobile).